Consider the following 147-residue polypeptide: EPSGNSLSSALNELLDKNNNYAIPKVAIIFDDFKSSLTGGDDGLIDNVIEVLNTVKVSINSVTENNNWTPLHFAIYFKKNPAVSAVLILENKDIEARTSIMLIVQKLLLELYNYFINNYAETLDEEALFNRLDEQGKLELALIMHNK.

4 ANK repeats span residues 57 to 59 (VSI), 66 to 78 (NNWTPLHFAIYFK), 79 to 96 (KNPAVSAVLILENKDIEA), and 98 to 125 (TSIMLIVQKLLLELYNYFINNYAETLDE).

The protein belongs to the cationic peptide 01 (latrotoxin) family. 04 (delta-latroinsectotoxin) subfamily. As to quaternary structure, homotetramer in membrane. In terms of tissue distribution, expressed by the venom gland.

Its subcellular location is the secreted. It localises to the target cell membrane. In terms of biological role, insecticidal presynaptic neurotoxin that induces massive neurotransmitter release at insect (but not vertebrate) neuromuscular junctions. Native toxin forms cation-permeable pores (with high permeability to calcium) in lipid membranes locust muscle membrane and artificial lipid bilayers. May bind to insect neurexin-1 homolog, insect adhesion G protein-coupled receptor L1 homolog, and insect receptor-type tyrosine-protein phosphatase S homolog, and induces neurotransmitter exocytosis both by forming tetrameric pores in membranes and signaling via G protein-coupled receptor. Oligomerization is a process independent of divalent cations. The polypeptide is Delta-latroinsectotoxin-Lhe1a (Latrodectus hesperus (Western black widow spider)).